Here is a 25-residue protein sequence, read N- to C-terminus: Caerin-1.17 (25 aa).

At Leu25 the chain carries Leucine amide.

The protein belongs to the frog skin active peptide (FSAP) family. Caerin subfamily. In terms of tissue distribution, expressed by the skin dorsal glands.

It localises to the secreted. Functionally, caerin-1.17 shows significant activity against Gram-positive organisms, but is less effective against Gram-negative organisms. This chain is Caerin-1.17, found in Ranoidea gracilenta (Dainty green tree frog).